The following is a 191-amino-acid chain: Bcl-2-like protein 10 (191 aa).

A BH1 motif is present at residues 79–98; the sequence is LSKDQDFSWSQLVMLLAFAG. Residue lysine 112 forms a Glycyl lysine isopeptide (Lys-Gly) (interchain with G-Cter in ubiquitin) linkage. Residues 144-155 carry the BH2 motif; the sequence is RLEALGGWDGFC. The helical transmembrane segment at 166–183 threads the bilayer; the sequence is FWRRLLIQAFLSGFFATA.

It belongs to the Bcl-2 family. In terms of assembly, interacts with BAX. Interacts with BCL2 and BCL2L1/BCLX. Interacts with APAF1. Interacts with ITPR1, ITPR2 and ITPR3; the interaction with ITPR1 is increased in the presence of AHCLY1. Interacts with AHCYL1. Interacts with HIP1R (via ENTH and I/LWEQ domains). Interacts with CASP9. Interacts with BCL2L11/BIM. Interacts with BIK. Interacts with UBQLN4. Interacts with NME2/NM23-H2. Interacts with PMAIP1/NOXA. Interacts with TPX2. Interacts with UBQLN1; in the cytoplasm. Interacts (via BH1 domain) with BECN1. Ca(2+) is required as a cofactor. Post-translationally, monoubiquitinated by UBQLN1; results in stabilization of BCL2L10 protein abundance and in relocalization from mitochondria to cytoplasm. In terms of tissue distribution, expressed in multiple embryonic tissues. Restricted to the ovary and testis in adult mice.

It localises to the mitochondrion. Its subcellular location is the nucleus membrane. The protein resides in the endoplasmic reticulum. It is found in the cytoplasm. The protein localises to the cytoskeleton. It localises to the spindle. Its function is as follows. Promotes cell survival by suppressing apoptosis induced by BAX but not BAK. Increases binding of AHCYL1/IRBIT to ITPR1. Reduces ITPR1-mediated calcium release from the endoplasmic reticulum cooperatively with AHCYL1/IRBIT under normal cellular conditions. Under apoptotic stress conditions, dissociates from ITPR1 and is displaced from mitochondria-associated endoplasmic reticulum membranes, leading to increased Ca(2+) transfer to mitochondria which promotes apoptosis. Required for the correct formation of the microtubule organizing center during oocyte cell division, potentially via regulation of protein abundance and localization of other microtubule organizing center components such as AURKA and TPX2. The protein is Bcl-2-like protein 10 of Mus musculus (Mouse).